The primary structure comprises 123 residues: Late histone H2B.L3 (123 aa).

A compositionally biased stretch (low complexity) spans 1 to 10; sequence MPAKAQAAGK. The disordered stretch occupies residues 1–32; sequence MPAKAQAAGKKGSKKAKAPKPSGDKKRRRKRK. Ser110 carries O-linked (GlcNAc) serine glycosylation. A Glycyl lysine isopeptide (Lys-Gly) (interchain with G-Cter in ubiquitin) cross-link involves residue Lys118.

The protein belongs to the histone H2B family. In terms of assembly, the nucleosome is a histone octamer containing two molecules each of H2A, H2B, H3 and H4 assembled in one H3-H4 heterotetramer and two H2A-H2B heterodimers. The octamer wraps approximately 147 bp of DNA. Monoubiquitination of Lys-118 gives a specific tag for epigenetic transcriptional activation and is also prerequisite for histone H3 'Lys-4' and 'Lys-79' methylation. Post-translationally, glcNAcylation at Ser-110 promotes monoubiquitination of Lys-118. It fluctuates in response to extracellular glucose, and associates with transcribed genes.

Its subcellular location is the nucleus. It is found in the chromosome. Functionally, core component of nucleosome. Nucleosomes wrap and compact DNA into chromatin, limiting DNA accessibility to the cellular machineries which require DNA as a template. Histones thereby play a central role in transcription regulation, DNA repair, DNA replication and chromosomal stability. DNA accessibility is regulated via a complex set of post-translational modifications of histones, also called histone code, and nucleosome remodeling. This Strongylocentrotus purpuratus (Purple sea urchin) protein is Late histone H2B.L3.